We begin with the raw amino-acid sequence, 95 residues long: Small ribosomal subunit protein uS19 (95 aa).

This sequence belongs to the universal ribosomal protein uS19 family.

In terms of biological role, protein S19 forms a complex with S13 that binds strongly to the 16S ribosomal RNA. The polypeptide is Small ribosomal subunit protein uS19 (Lactobacillus gasseri (strain ATCC 33323 / DSM 20243 / BCRC 14619 / CIP 102991 / JCM 1131 / KCTC 3163 / NCIMB 11718 / NCTC 13722 / AM63)).